The sequence spans 365 residues: S-adenosylmethionine:tRNA ribosyltransferase-isomerase (365 aa).

It belongs to the QueA family. In terms of assembly, monomer.

The protein resides in the cytoplasm. It catalyses the reaction 7-aminomethyl-7-carbaguanosine(34) in tRNA + S-adenosyl-L-methionine = epoxyqueuosine(34) in tRNA + adenine + L-methionine + 2 H(+). It participates in tRNA modification; tRNA-queuosine biosynthesis. Its function is as follows. Transfers and isomerizes the ribose moiety from AdoMet to the 7-aminomethyl group of 7-deazaguanine (preQ1-tRNA) to give epoxyqueuosine (oQ-tRNA). In Prochlorococcus marinus (strain NATL2A), this protein is S-adenosylmethionine:tRNA ribosyltransferase-isomerase.